The sequence spans 155 residues: Small ribosomal subunit protein eS19 (155 aa).

This sequence belongs to the eukaryotic ribosomal protein eS19 family. As to quaternary structure, component of the small ribosomal subunit.

The protein localises to the cytoplasm. In terms of biological role, component of the small ribosomal subunit. The ribosome is a large ribonucleoprotein complex responsible for the synthesis of proteins in the cell. Required for proper maturation of the small (40S) ribosomal subunit. The protein is Small ribosomal subunit protein eS19 (RPS19) of Entamoeba histolytica (strain ATCC 30459 / HM-1:IMSS / ABRM).